Here is a 103-residue protein sequence, read N- to C-terminus: uncharacterized protein (103 aa).

3 helical membrane-spanning segments follow: residues 1 to 21 (MPGV…VFLS), 29 to 49 (IAFI…TGYF), and 69 to 89 (VVEW…GLLF).

The protein localises to the cell membrane. This is an uncharacterized protein from Methanocaldococcus jannaschii (strain ATCC 43067 / DSM 2661 / JAL-1 / JCM 10045 / NBRC 100440) (Methanococcus jannaschii).